The primary structure comprises 443 residues: Threonine/serine transporter TdcC (443 aa).

Helical transmembrane passes span 22 to 42 (TTWT…FFPI), 44 to 64 (AGFG…PIAF), 97 to 117 (GVVI…IYGV), 140 to 160 (FVAL…KDLM), 163 to 183 (VMSY…LSLI), 207 to 227 (ILIT…FSPI), 261 to 281 (MLMV…LSPA), 311 to 331 (FAIT…FKSF), 366 to 386 (LSMI…PNIL), 389 to 409 (IEAM…MYAI), and 423 to 443 (DNVF…YKLF).

Belongs to the amino acid/polyamine transporter 2 family. SdaC/TdcC subfamily.

It is found in the cell inner membrane. The catalysed reaction is L-threonine(in) + H(+)(in) = L-threonine(out) + H(+)(out). It carries out the reaction L-serine(in) + H(+)(in) = L-serine(out) + H(+)(out). In terms of biological role, involved in the import of threonine and serine into the cell, with the concomitant import of a proton (symport system). This is Threonine/serine transporter TdcC from Shigella flexneri serotype 5b (strain 8401).